We begin with the raw amino-acid sequence, 210 residues long: Outer-membrane lipoprotein carrier protein (210 aa).

The first 26 residues, 1-26, serve as a signal peptide directing secretion; that stretch reads MHMIRRAAGALAVFAVAALAAAPAWA.

It belongs to the LolA family. Monomer.

It is found in the periplasm. Functionally, participates in the translocation of lipoproteins from the inner membrane to the outer membrane. Only forms a complex with a lipoprotein if the residue after the N-terminal Cys is not an aspartate (The Asp acts as a targeting signal to indicate that the lipoprotein should stay in the inner membrane). The polypeptide is Outer-membrane lipoprotein carrier protein (Bordetella bronchiseptica (strain ATCC BAA-588 / NCTC 13252 / RB50) (Alcaligenes bronchisepticus)).